A 303-amino-acid chain; its full sequence is MKKKILFWVLGILGVLIIGGGIYAYNVYSSVSNTLKEVHQPLKRDQNNSNVGEKVSKSEPVSILLLGADERGDDKGRSDSLMVITLNPKNNSMKTVSIPRDTYTEIVGKGKSDKINHAYAFGGVDMSVATVEKFLDVPINYYIEVNMEGFKDIVDAVGGVDVTNDLEFTQDGHHFAKGNIHLTGDQALAFTRMRKQDPRGDFGRQMRQRQVMQGVIKKGASFSSLTGYGDVLAAIQKNVKTNLTQDQMFDMQKNYKDCLKNSEDIQIPGDGHKAADGIWYYYVPDAAKQDLTNKLRSHLEVTK.

Topologically, residues 1-4 are cytoplasmic; sequence MKKK. The chain crosses the membrane as a helical; Signal-anchor for type II membrane protein span at residues 5 to 25; that stretch reads ILFWVLGILGVLIIGGGIYAY. Residues 26-303 lie on the Extracellular side of the membrane; sequence NVYSSVSNTL…KLRSHLEVTK (278 aa).

Belongs to the LytR/CpsA/Psr (LCP) family.

The protein localises to the cell membrane. It functions in the pathway cell wall biogenesis. In terms of biological role, may catalyze the final step in cell wall teichoic acid biosynthesis, the transfer of the anionic cell wall polymers (APs) from their lipid-linked precursor to the cell wall peptidoglycan (PG). This chain is Polyisoprenyl-teichoic acid--peptidoglycan teichoic acid transferase TagU, found in Bacillus cereus (strain AH820).